Reading from the N-terminus, the 447-residue chain is Tubulin beta chain (447 aa).

Residues Gln-11, Glu-69, Ser-138, Gly-142, Thr-143, Gly-144, Asn-204, and Asn-226 each coordinate GTP. Residue Glu-69 coordinates Mg(2+). Positions 425 to 447 are disordered; sequence YQEASISEGEEEYDEEAPLEAEE. Residues 432–447 show a composition bias toward acidic residues; that stretch reads EGEEEYDEEAPLEAEE.

This sequence belongs to the tubulin family. In terms of assembly, dimer of alpha and beta chains. A typical microtubule is a hollow water-filled tube with an outer diameter of 25 nm and an inner diameter of 15 nM. Alpha-beta heterodimers associate head-to-tail to form protofilaments running lengthwise along the microtubule wall with the beta-tubulin subunit facing the microtubule plus end conferring a structural polarity. Microtubules usually have 13 protofilaments but different protofilament numbers can be found in some organisms and specialized cells. Requires Mg(2+) as cofactor.

The protein resides in the cytoplasm. It localises to the cytoskeleton. Functionally, tubulin is the major constituent of microtubules, a cylinder consisting of laterally associated linear protofilaments composed of alpha- and beta-tubulin heterodimers. Microtubules grow by the addition of GTP-tubulin dimers to the microtubule end, where a stabilizing cap forms. Below the cap, tubulin dimers are in GDP-bound state, owing to GTPase activity of alpha-tubulin. The protein is Tubulin beta chain (tubB) of Phaeosphaeria nodorum (strain SN15 / ATCC MYA-4574 / FGSC 10173) (Glume blotch fungus).